The sequence spans 101 residues: Large ribosomal subunit protein uL23 (101 aa).

This sequence belongs to the universal ribosomal protein uL23 family. In terms of assembly, part of the 50S ribosomal subunit. Contacts protein L29, and trigger factor when it is bound to the ribosome.

One of the early assembly proteins it binds 23S rRNA. One of the proteins that surrounds the polypeptide exit tunnel on the outside of the ribosome. Forms the main docking site for trigger factor binding to the ribosome. This Corynebacterium glutamicum (strain R) protein is Large ribosomal subunit protein uL23.